The chain runs to 70 residues: Consomatin Mrc3 (70 aa).

The N-terminal stretch at 1-22 is a signal peptide; the sequence is MQTAYWVMVMMMVWITAPLSEG. Residues 23-55 constitute a propeptide that is removed on maturation; that stretch reads GKLNDVIRGLVPDDVTPKRILQSLISRRRFDGR. The cysteines at positions 62 and 67 are disulfide-linked. A D-tryptophan modification is found at Trp-64. Residue Pro-68 is modified to 4-hydroxyproline. Tyr-69 carries the post-translational modification Tyrosine amide.

This sequence belongs to the conotoxin C superfamily. Consomatin family. In terms of tissue distribution, expressed by the venom duct.

The protein resides in the secreted. Moderately activates human somatostatin receptors (SSTR) with a preferential activation of SSTR1 and SSTR4. In vivo, does not cause behavioral changes in mice within a few minutes of intracranial injection, but causes a progressive loss of movement thereafter. Four to five hours after injection, mice recover, even with the highest dose tested. Shows antinociception and antihyperalgesia activities in two mouse models of acute pain, most probably by acting outside the central nervous system. The chain is Consomatin Mrc3 from Conus mercator (Trader cone).